The primary structure comprises 204 residues: Peptide deformylase (204 aa).

Residues Cys131 and His174 each coordinate Fe cation. The active site involves Glu175. His178 contacts Fe cation.

It belongs to the polypeptide deformylase family. Requires Fe(2+) as cofactor.

It catalyses the reaction N-terminal N-formyl-L-methionyl-[peptide] + H2O = N-terminal L-methionyl-[peptide] + formate. Its function is as follows. Removes the formyl group from the N-terminal Met of newly synthesized proteins. Requires at least a dipeptide for an efficient rate of reaction. N-terminal L-methionine is a prerequisite for activity but the enzyme has broad specificity at other positions. This is Peptide deformylase from Streptococcus gordonii (strain Challis / ATCC 35105 / BCRC 15272 / CH1 / DL1 / V288).